The primary structure comprises 433 residues: Glutamate-1-semialdehyde 2,1-aminomutase (433 aa).

The residue at position 271 (Lys-271) is an N6-(pyridoxal phosphate)lysine.

Belongs to the class-III pyridoxal-phosphate-dependent aminotransferase family. HemL subfamily. Homodimer. It depends on pyridoxal 5'-phosphate as a cofactor.

It is found in the cytoplasm. The catalysed reaction is (S)-4-amino-5-oxopentanoate = 5-aminolevulinate. It functions in the pathway porphyrin-containing compound metabolism; protoporphyrin-IX biosynthesis; 5-aminolevulinate from L-glutamyl-tRNA(Glu): step 2/2. The protein operates within porphyrin-containing compound metabolism; chlorophyll biosynthesis. The polypeptide is Glutamate-1-semialdehyde 2,1-aminomutase (Prochlorococcus marinus (strain MIT 9215)).